A 109-amino-acid polypeptide reads, in one-letter code: Nucleoid-associated protein HS_1309 (109 aa).

This sequence belongs to the YbaB/EbfC family. Homodimer.

It localises to the cytoplasm. The protein resides in the nucleoid. Functionally, binds to DNA and alters its conformation. May be involved in regulation of gene expression, nucleoid organization and DNA protection. The chain is Nucleoid-associated protein HS_1309 from Histophilus somni (strain 129Pt) (Haemophilus somnus).